A 239-amino-acid polypeptide reads, in one-letter code: Proteasome activator complex subunit 2 (239 aa).

Ala2 bears the N-acetylalanine mark. A Phosphoserine modification is found at Ser10. Residues 65–87 are disordered; it reads DIPIPDPPPKDDEMETDKQEKKE. A compositionally biased stretch (basic and acidic residues) spans 72–87; the sequence is PPKDDEMETDKQEKKE.

Belongs to the PA28 family. In terms of assembly, heterodimer of PSME1 and PSME2, which forms a hexameric ring.

Implicated in immunoproteasome assembly and required for efficient antigen processing. The PA28 activator complex enhances the generation of class I binding peptides by altering the cleavage pattern of the proteasome. In Mus musculus (Mouse), this protein is Proteasome activator complex subunit 2 (Psme2).